Reading from the N-terminus, the 106-residue chain is Envelope small membrane protein (106 aa).

Residues 1-11 (MMNLLNTSLEE) are Virion surface-facing. The helical transmembrane segment at 12-32 (NGSFLTALYVICEFVALYLLG) threads the bilayer. Residues 33-106 (RALQAFVQAA…ANFQNGKLHT (74 aa)) lie on the Intravirion side of the membrane.

The protein belongs to the gammacoronaviruses E protein family. In terms of assembly, homooligomer. Interacts with the M membrane protein in the budding compartment of the host cell, which is located between endoplasmic reticulum and the Golgi complex. The cytoplasmic tails of both proteins are important for this function. Interacts with Nucleoprotein.

The protein localises to the host Golgi apparatus membrane. Its function is as follows. Plays a central role in virus morphogenesis and assembly. Acts as a viroporin and self-assembles in host membranes forming pentameric protein-lipid pores that allow ion transport. Also plays a role in the induction of apoptosis. The protein is Envelope small membrane protein of Gallus gallus (Chicken).